The following is a 226-amino-acid chain: Endonuclease NucS (226 aa).

Belongs to the NucS endonuclease family.

It is found in the cytoplasm. In terms of biological role, cleaves both 3' and 5' ssDNA extremities of branched DNA structures. The sequence is that of Endonuclease NucS from Mycobacterium tuberculosis (strain CDC 1551 / Oshkosh).